A 405-amino-acid polypeptide reads, in one-letter code: Phosphoglycerate kinase (405 aa).

Substrate is bound by residues 24–26 (DFN), Arg-40, 63–66 (HLGR), Arg-122, and Arg-162. ATP-binding positions include Lys-212, Glu-331, and 361–364 (GGDS).

The protein belongs to the phosphoglycerate kinase family. Monomer.

It is found in the cytoplasm. The enzyme catalyses (2R)-3-phosphoglycerate + ATP = (2R)-3-phospho-glyceroyl phosphate + ADP. The protein operates within carbohydrate degradation; glycolysis; pyruvate from D-glyceraldehyde 3-phosphate: step 2/5. This chain is Phosphoglycerate kinase, found in Corynebacterium aurimucosum (strain ATCC 700975 / DSM 44827 / CIP 107346 / CN-1) (Corynebacterium nigricans).